A 180-amino-acid polypeptide reads, in one-letter code: Dual-action ribosomal maturation protein DarP (180 aa).

Belongs to the DarP family.

The protein resides in the cytoplasm. In terms of biological role, member of a network of 50S ribosomal subunit biogenesis factors which assembles along the 30S-50S interface, preventing incorrect 23S rRNA structures from forming. Promotes peptidyl transferase center (PTC) maturation. The protein is Dual-action ribosomal maturation protein DarP of Pasteurella multocida (strain Pm70).